We begin with the raw amino-acid sequence, 215 residues long: Nucleoside triphosphate pyrophosphatase (215 aa).

Aspartate 80 serves as the catalytic Proton acceptor.

This sequence belongs to the Maf family. The cofactor is a divalent metal cation.

The protein resides in the cytoplasm. It catalyses the reaction a ribonucleoside 5'-triphosphate + H2O = a ribonucleoside 5'-phosphate + diphosphate + H(+). The catalysed reaction is a 2'-deoxyribonucleoside 5'-triphosphate + H2O = a 2'-deoxyribonucleoside 5'-phosphate + diphosphate + H(+). Its function is as follows. Nucleoside triphosphate pyrophosphatase. May have a dual role in cell division arrest and in preventing the incorporation of modified nucleotides into cellular nucleic acids. This is Nucleoside triphosphate pyrophosphatase from Leifsonia xyli subsp. xyli (strain CTCB07).